We begin with the raw amino-acid sequence, 422 residues long: MNQVELLSPAGNLKKLKIALNYGADAVYGGVSHFSLRNRAGKEFTLETFKEGIDYAHALNKKVYATINGFPFNSQLKLLEEHIDKMAELEPDAFIIAAPGVVKLALKIAPHIPIHLSTQANVLNLLDAQVFYDLGVKRIVCARELSLNDAIEIKKALPNLELEIFVHGSMCFAFSGRCLISALQKGRVPNRGSCANDCRFDYEYYVKNPDNGVMMRLVEEEGVGTHIFNAKDLNLSGHIAEILSSNAISALKIEGRTKSSYYAAQTTRIYRLAVDDFYHNTLKPSFYASELNTLKNRGFTDGYLMRRPFERLDTQNHQTAISEGDFQVNGEITEDGRFFACKFTTTTNTAYEIIAPKNAAITPIVNEIGKIYTFEKRSYLVLYKILLENNTELETIHSGNVNLVRLPAPLPAFSFLRTQVRV.

A signal peptide spans 1-58 (MNQVELLSPAGNLKKLKIALNYGADAVYGGVSHFSLRNRAGKEFTLETFKEGIDYAHA).

Belongs to the peptidase U32 family.

Its function is as follows. Involved in prephenate-dependent formation of 5-hydroxyuridine (ho5U) modification at position 34 in tRNAs, the first step in 5-carboxymethoxyuridine (cmo5U) biosynthesis. The protein is tRNA hydroxylation protein P of Helicobacter pylori (strain ATCC 700392 / 26695) (Campylobacter pylori).